Consider the following 4644-residue polypeptide: Cytoplasmic dynein 1 heavy chain 1 (4644 aa).

An N-acetylserine modification is found at Ser-2. A stem region spans residues 2–1865; it reads SEPGGGEDGS…SIQMANAKFN (1864 aa). 4 coiled-coil regions span residues 48-69, 179-200, 453-476, and 541-564; these read AALE…FLSD, SVEK…NIEI, AHRK…QLRA, and TEAW…RITA. A Phosphoserine modification is found at Ser-68. The interaction with DYNC1I2 stretch occupies residues 446-701; that stretch reads MVWRINPAHR…NTQEIFDDWA (256 aa). The interval 649–800 is interaction with DYNC1LI2; the sequence is AKQIDRQLTA…EKVEERNTIS (152 aa). Lys-1123 carries the N6-acetyllysine modification. Residues 1169-1201 are a coiled coil; the sequence is TYVQSLKRKIKQFEKQVELYRNGQRLLEKQRFQ. At Ser-1228 the chain carries Phosphoserine. 2 coiled-coil regions span residues 1229–1250 and 1355–1371; these read AIQQ…AVES and RKLR…LKNF. AAA regions lie at residues 1866 to 2097, 2178 to 2450, 2554 to 2803, and 2897 to 3166; these read YGFE…VLVS, EELK…LTRL, EVET…WVRG, and VFYE…GGRT. ATP-binding positions include 1904 to 1911 and 2222 to 2229; these read GPAGTGKT and GPSGSGKS. The disordered stretch occupies residues 2388–2408; it reads GEDEAQRRRKGKEDEGEEAAS. ATP is bound by residues 2593–2600 and 2935–2942; these read GPPGSGKT and GVSGAGKT. Coiled-coil stretches lie at residues 3187 to 3273, 3394 to 3498, and 3735 to 3798; these read EKRS…ADKQ, AIAQ…KNQM, and EFQL…VSQQ. Residues 3187–3498 are stalk; the sequence is EKRSELEEQQ…KTSETFKNQM (312 aa). Lys-3478 bears the N6-acetyllysine mark. AAA stretches follow at residues 3551–3780 and 4003–4219; these read LSNA…EVTR and AHMF…TVDT. Position 4160 is a phosphoserine (Ser-4160). An N6-acetyllysine modification is found at Lys-4281. Thr-4364 is subject to Phosphothreonine. A Phosphoserine modification is found at Ser-4366.

The protein belongs to the dynein heavy chain family. In terms of assembly, homodimer. The cytoplasmic dynein 1 complex consists of two catalytic heavy chains (HCs) and a number of non-catalytic subunits presented by intermediate chains (ICs), light intermediate chains (LICs) and light chains (LCs); the composition seems to vary in respect to the IC, LIC and LC composition. The heavy chain homodimer serves as a scaffold for the probable homodimeric assembly of the respective non-catalytic subunits. The ICs and LICs bind directly to the HC dimer and dynein LCs assemble on the IC dimer. Interacts with DYNC1LI1; DYNC1LI1 and DYNC1LI2 bind mutually exclusive to DYNC1H1. Interacts with DYNC1LI2; DYNC1LI1 and DYNC1LI2 bind mutually exclusive to DYNC1H1. Interacts with DYNC1I2. Interacts with BICD2. Interacts with DNALI1.

It localises to the cytoplasm. The protein localises to the cytoskeleton. Cytoplasmic dynein 1 acts as a motor for the intracellular retrograde motility of vesicles and organelles along microtubules. Dynein has ATPase activity; the force-producing power stroke is thought to occur on release of ADP. Plays a role in mitotic spindle assembly and metaphase plate congression. This chain is Cytoplasmic dynein 1 heavy chain 1 (Dync1h1), found in Mus musculus (Mouse).